The following is a 216-amino-acid chain: Glycerol-3-phosphate acyltransferase (216 aa).

5 helical membrane passes run 11–31, 62–82, 95–115, 132–152, and 171–191; these read LVLG…FGLV, LALA…LVAS, VLAG…PIWL, ATAW…AALF, and LVLA…LAWI.

Belongs to the PlsY family. Probably interacts with PlsX.

The protein resides in the cell inner membrane. The enzyme catalyses an acyl phosphate + sn-glycerol 3-phosphate = a 1-acyl-sn-glycero-3-phosphate + phosphate. The protein operates within lipid metabolism; phospholipid metabolism. In terms of biological role, catalyzes the transfer of an acyl group from acyl-phosphate (acyl-PO(4)) to glycerol-3-phosphate (G3P) to form lysophosphatidic acid (LPA). This enzyme utilizes acyl-phosphate as fatty acyl donor, but not acyl-CoA or acyl-ACP. In Rhodospirillum rubrum (strain ATCC 11170 / ATH 1.1.1 / DSM 467 / LMG 4362 / NCIMB 8255 / S1), this protein is Glycerol-3-phosphate acyltransferase.